The sequence spans 455 residues: Acetylcholinesterase collagenic tail peptide (455 aa).

Positions 1–22 are cleaved as a signal peptide; it reads MVVLNPMTLGIYLQLFFLSIVS. Residues 51 to 67 are PRAD; that stretch reads CCLLTPPPPPLFPPPFF. The interval 90-282 is disordered; the sequence is QSPCMQGSLG…QLIMGPKGER (193 aa). Collagen-like domains lie at 96 to 269 and 277 to 291; these read GSLG…PGPP and GPKG…PGRC. A compositionally biased stretch (pro residues) spans 101–112; that stretch reads PGPPGPQGPPGL. The span at 118–127 shows a compositional bias: basic and acidic residues; sequence PKGEKGELGR. A heparan sulfate proteoglycan binding region spans residues 130-133; the sequence is RKGR. The segment covering 134–152 has biased composition (pro residues); the sequence is PGPPGVPGMPGPIGWPGPE. The span at 182–200 shows a compositional bias: basic and acidic residues; it reads RGEKGSRGEKGDLGPKGEK. The segment at 235–238 is heparan sulfate proteoglycan binding; the sequence is KRGK. Over residues 262–271 the composition is skewed to pro residues; the sequence is RPGPPGPPPA.

The protein belongs to the COLQ family. In terms of assembly, homotrimer. Component of the asymmetric form of AChE, a disulfide-bonded oligomer composed of the collagenic subunits (Q) and a variable number of asymmetric catalytic subunits (T). The N-terminal of a collagenic subunit (Q) associates with the C-terminal of a catalytic subunit (T). In terms of processing, the triple-helical tail is stabilized by disulfide bonds at each end. In terms of tissue distribution, found at the end plate of skeletal muscle.

The protein localises to the synapse. Anchors the catalytic subunits of asymmetric AChE to the synaptic basal lamina. The protein is Acetylcholinesterase collagenic tail peptide (COLQ) of Homo sapiens (Human).